The primary structure comprises 404 residues: Lupus La protein homolog (404 aa).

The HTH La-type RNA-binding domain occupies 7–99 (NEKMAALEAK…RRSPSKPLPE (93 aa)). A phosphoserine mark is found at Ser92 and Ser94. The RRM domain occupies 111–187 (RSVYIKGFPT…TDLLILFKED (77 aa)). N6-acetyllysine is present on Lys116. Position 120 is a phosphothreonine (Thr120). Lys128 bears the N6-acetyllysine mark. Ser225 is modified (phosphoserine). The xRRM domain occupies 227-348 (EEKIGCLLKF…KGKGNKAAQA (122 aa)). Residues Lys328 and Lys341 each carry the N6-acetyllysine modification. Positions 329 to 342 (WKSKGRRFKGKGKG) are enriched in basic residues. The disordered stretch occupies residues 329 to 404 (WKSKGRRFKG…QKTENGAGDQ (76 aa)). A compositionally biased stretch (low complexity) spans 343-354 (NKAAQAGSAKGK). Residue Lys360 is modified to N6-acetyllysine. Thr362 carries the phosphothreonine modification. Ser366 carries the post-translational modification Phosphoserine. The span at 381 to 391 (RAREETDKEPP) shows a compositional bias: basic and acidic residues.

Interacts with DDX15. May interact with RUFY1. Phosphorylated in the C-terminal part of the protein.

It is found in the nucleus. Functionally, binds to the 3' poly(U) terminus of nascent RNA polymerase III transcripts, protecting them from exonuclease digestion and facilitating their folding and maturation. This is Lupus La protein homolog (SSB) from Bos taurus (Bovine).